A 444-amino-acid polypeptide reads, in one-letter code: Type I restriction enzyme EcoDI specificity subunit (444 aa).

It belongs to the type-I restriction system S methylase family. In terms of assembly, the type I restriction/modification system is composed of three polypeptides R, M and S; the restriction enzyme has stoichiometry R(2)M(2)S(1) while the methyltransferase is M(2)S(1).

Its function is as follows. The specificity (S) subunit of a type I restriction enzyme; this subunit dictates DNA sequence specificity. The M and S subunits together form a methyltransferase (MTase) that methylates two adenine residues of the sequence 5'-TTAN(7)GTCY-3'. In the presence of the R subunit the complex can also act as an endonuclease, binding to the same target sequence but cutting the DNA some distance from this site. Whether the DNA is cut or modified depends on the methylation state of the target sequence. When the target site is unmodified, the DNA is cut. When the target site is hemimethylated, the complex acts as a maintenance MTase modifying the DNA so that both strands become methylated. After locating a non-methylated recognition site, the enzyme complex serves as a molecular motor that translocates DNA in an ATP-dependent manner until a collision occurs that triggers cleavage. The sequence is that of Type I restriction enzyme EcoDI specificity subunit from Escherichia coli.